Here is a 519-residue protein sequence, read N- to C-terminus: Putative cytochrome P450 CYP13A1 (519 aa).

Cys-465 contacts heme.

Belongs to the cytochrome P450 family. The cofactor is heme.

Functionally, cytochromes P450 are a group of heme-thiolate monooxygenases. They oxidize a variety of structurally unrelated compounds, including steroids, fatty acids, and xenobiotics. This is Putative cytochrome P450 CYP13A1 (cyp-13A1) from Caenorhabditis elegans.